The chain runs to 251 residues: tRNA pseudouridine synthase A (251 aa).

Catalysis depends on Asp53, which acts as the Nucleophile. Tyr110 lines the substrate pocket.

The protein belongs to the tRNA pseudouridine synthase TruA family. Homodimer.

The catalysed reaction is uridine(38/39/40) in tRNA = pseudouridine(38/39/40) in tRNA. Formation of pseudouridine at positions 38, 39 and 40 in the anticodon stem and loop of transfer RNAs. The protein is tRNA pseudouridine synthase A of Mesoplasma florum (strain ATCC 33453 / NBRC 100688 / NCTC 11704 / L1) (Acholeplasma florum).